The sequence spans 184 residues: Gastrokine-2 (184 aa).

A signal peptide spans 1–20; the sequence is MKSLVAFLVVLSILRIQSQA. The region spanning 54 to 151 is the BRICHOS domain; sequence HSGSCSSTTI…LCKHIPLYEG (98 aa). An intrachain disulfide couples Cys-81 to Cys-143.

In terms of assembly, heterodimer with TFF1; disulfide linked. Interacts with TFF2.

Its subcellular location is the secreted. The chain is Gastrokine-2 (Gkn2) from Rattus norvegicus (Rat).